Consider the following 210-residue polypeptide: Germin-like protein subfamily 3 member 4 (210 aa).

The N-terminal stretch at 1–18 is a signal peptide; that stretch reads MKFFVVIVFCAIFLSVSG. A disulfide bridge connects residues cysteine 27 and cysteine 44. The region spanning 58 to 190 is the Cupin type-1 domain; it reads TKLTEAGDTD…VFGIDQEHIK (133 aa). N-linked (GlcNAc...) asparagine glycosylation occurs at asparagine 73. The Mn(2+) site is built by histidine 106, histidine 108, glutamate 113, and histidine 152.

Belongs to the germin family. In terms of assembly, oligomer (believed to be a pentamer but probably hexamer).

Its subcellular location is the secreted. It is found in the extracellular space. The protein resides in the apoplast. Functionally, may play a role in plant defense. Probably has no oxalate oxidase activity even if the active site is conserved. In Arabidopsis thaliana (Mouse-ear cress), this protein is Germin-like protein subfamily 3 member 4.